A 252-amino-acid chain; its full sequence is Thiazole synthase (252 aa).

The active-site Schiff-base intermediate with DXP is K95. 1-deoxy-D-xylulose 5-phosphate contacts are provided by residues G156, 182–183, and 204–205; these read AG and NT.

The protein belongs to the ThiG family. As to quaternary structure, homotetramer. Forms heterodimers with either ThiH or ThiS.

The protein resides in the cytoplasm. The enzyme catalyses [ThiS sulfur-carrier protein]-C-terminal-Gly-aminoethanethioate + 2-iminoacetate + 1-deoxy-D-xylulose 5-phosphate = [ThiS sulfur-carrier protein]-C-terminal Gly-Gly + 2-[(2R,5Z)-2-carboxy-4-methylthiazol-5(2H)-ylidene]ethyl phosphate + 2 H2O + H(+). It functions in the pathway cofactor biosynthesis; thiamine diphosphate biosynthesis. Functionally, catalyzes the rearrangement of 1-deoxy-D-xylulose 5-phosphate (DXP) to produce the thiazole phosphate moiety of thiamine. Sulfur is provided by the thiocarboxylate moiety of the carrier protein ThiS. In vitro, sulfur can be provided by H(2)S. The sequence is that of Thiazole synthase from Shewanella sp. (strain ANA-3).